A 184-amino-acid polypeptide reads, in one-letter code: ATP-dependent protease subunit HslV (184 aa).

Thr-12 is an active-site residue. Na(+)-binding residues include Ala-166, Cys-169, and Thr-172.

This sequence belongs to the peptidase T1B family. HslV subfamily. A double ring-shaped homohexamer of HslV is capped on each side by a ring-shaped HslU homohexamer. The assembly of the HslU/HslV complex is dependent on binding of ATP.

Its subcellular location is the cytoplasm. The enzyme catalyses ATP-dependent cleavage of peptide bonds with broad specificity.. With respect to regulation, allosterically activated by HslU binding. In terms of biological role, protease subunit of a proteasome-like degradation complex believed to be a general protein degrading machinery. This is ATP-dependent protease subunit HslV from Brucella canis (strain ATCC 23365 / NCTC 10854 / RM-666).